The sequence spans 361 residues: Aromatic amino acid aminotransferase (361 aa).

At lysine 221 the chain carries N6-(pyridoxal phosphate)lysine.

This sequence belongs to the class-II pyridoxal-phosphate-dependent aminotransferase family. Homodimer. Pyridoxal 5'-phosphate is required as a cofactor.

The enzyme catalyses an aromatic L-alpha-amino acid + 2-oxoglutarate = an aromatic oxo-acid + L-glutamate. Functionally, aminotransferase that catalyzes the conversion of aromatic amino acids and 2-oxoglutarate into corresponding aromatic oxo acids and L-glutamate. The sequence is that of Aromatic amino acid aminotransferase from Mycobacterium marinum (strain ATCC BAA-535 / M).